The following is an 807-amino-acid chain: Glycerol-3-phosphate acyltransferase (807 aa).

An HXXXXD motif motif is present at residues 308-313; the sequence is CHRSHM.

This sequence belongs to the GPAT/DAPAT family.

It is found in the cell inner membrane. It catalyses the reaction sn-glycerol 3-phosphate + an acyl-CoA = a 1-acyl-sn-glycero-3-phosphate + CoA. It participates in phospholipid metabolism; CDP-diacylglycerol biosynthesis; CDP-diacylglycerol from sn-glycerol 3-phosphate: step 1/3. The sequence is that of Glycerol-3-phosphate acyltransferase from Shewanella woodyi (strain ATCC 51908 / MS32).